The primary structure comprises 232 residues: 2,3-bisphosphoglycerate-dependent phosphoglycerate mutase (232 aa).

Substrate is bound by residues 10–17 (RHGESIWN), 23–24 (TG), Arg-62, 89–92 (ERHY), Lys-100, 116–117 (RR), and 185–186 (GN). His-11 serves as the catalytic Tele-phosphohistidine intermediate. Catalysis depends on Glu-89, which acts as the Proton donor/acceptor.

This sequence belongs to the phosphoglycerate mutase family. BPG-dependent PGAM subfamily. As to quaternary structure, homodimer.

The enzyme catalyses (2R)-2-phosphoglycerate = (2R)-3-phosphoglycerate. The protein operates within carbohydrate degradation; glycolysis; pyruvate from D-glyceraldehyde 3-phosphate: step 3/5. In terms of biological role, catalyzes the interconversion of 2-phosphoglycerate and 3-phosphoglycerate. The protein is 2,3-bisphosphoglycerate-dependent phosphoglycerate mutase of Buchnera aphidicola subsp. Baizongia pistaciae (strain Bp).